The sequence spans 127 residues: uncharacterized protein (127 aa).

Residues 5–25 traverse the membrane as a helical segment; the sequence is ILGITIAFIILLLTTVAILFS.

The protein localises to the membrane. This is an uncharacterized protein from Mycoplasma genitalium (strain ATCC 33530 / DSM 19775 / NCTC 10195 / G37) (Mycoplasmoides genitalium).